The primary structure comprises 144 residues: Large ribosomal subunit protein uL16 (144 aa).

The protein belongs to the universal ribosomal protein uL16 family. In terms of assembly, part of the 50S ribosomal subunit.

In terms of biological role, binds 23S rRNA and is also seen to make contacts with the A and possibly P site tRNAs. The sequence is that of Large ribosomal subunit protein uL16 from Bacillus pumilus (strain SAFR-032).